The following is a 362-amino-acid chain: Probable dual-specificity RNA methyltransferase RlmN (362 aa).

Glutamate 105 acts as the Proton acceptor in catalysis. The Radical SAM core domain occupies 111-344; it reads HEYGNSICVT…VTIRREQGHD (234 aa). A disulfide bond links cysteine 118 and cysteine 349. Residues cysteine 125, cysteine 129, and cysteine 132 each coordinate [4Fe-4S] cluster. Residues 175–176, serine 207, 230–232, and asparagine 306 contribute to the S-adenosyl-L-methionine site; these read GE and SLH. The active-site S-methylcysteine intermediate is cysteine 349.

This sequence belongs to the radical SAM superfamily. RlmN family. [4Fe-4S] cluster serves as cofactor.

It localises to the cytoplasm. The enzyme catalyses adenosine(2503) in 23S rRNA + 2 reduced [2Fe-2S]-[ferredoxin] + 2 S-adenosyl-L-methionine = 2-methyladenosine(2503) in 23S rRNA + 5'-deoxyadenosine + L-methionine + 2 oxidized [2Fe-2S]-[ferredoxin] + S-adenosyl-L-homocysteine. It carries out the reaction adenosine(37) in tRNA + 2 reduced [2Fe-2S]-[ferredoxin] + 2 S-adenosyl-L-methionine = 2-methyladenosine(37) in tRNA + 5'-deoxyadenosine + L-methionine + 2 oxidized [2Fe-2S]-[ferredoxin] + S-adenosyl-L-homocysteine. In terms of biological role, specifically methylates position 2 of adenine 2503 in 23S rRNA and position 2 of adenine 37 in tRNAs. The protein is Probable dual-specificity RNA methyltransferase RlmN of Bacillus anthracis (strain A0248).